The sequence spans 311 residues: Tyrosine recombinase XerD (311 aa).

One can recognise a Core-binding (CB) domain in the interval 1 to 83 (MEFIAQFLEM…TIKSYYAFLI (83 aa)). In terms of domain architecture, Tyr recombinase spans 104-299 (KLPIILSIDQ…HTNHLKKALL (196 aa)). Active-site residues include Arg145, Lys176, His251, Arg254, and His277. Tyr286 functions as the O-(3'-phospho-DNA)-tyrosine intermediate in the catalytic mechanism.

The protein belongs to the 'phage' integrase family. XerD subfamily. Forms a cyclic heterotetrameric complex composed of two molecules of XerC and two molecules of XerD.

The protein resides in the cytoplasm. Functionally, site-specific tyrosine recombinase, which acts by catalyzing the cutting and rejoining of the recombining DNA molecules. The XerC-XerD complex is essential to convert dimers of the bacterial chromosome into monomers to permit their segregation at cell division. It also contributes to the segregational stability of plasmids. This is Tyrosine recombinase XerD from Rickettsia prowazekii (strain Madrid E).